We begin with the raw amino-acid sequence, 952 residues long: Valine--tRNA ligase (952 aa).

Residues 42-52 (PNVTGSLHMGH) carry the 'HIGH' region motif. The short motif at 554–558 (KMSKS) is the 'KMSKS' region element. An ATP-binding site is contributed by K557. Residues 888-952 (AELARLDGEI…EEQKKTIAAL (65 aa)) adopt a coiled-coil conformation.

Belongs to the class-I aminoacyl-tRNA synthetase family. ValS type 1 subfamily. In terms of assembly, monomer.

The protein localises to the cytoplasm. The catalysed reaction is tRNA(Val) + L-valine + ATP = L-valyl-tRNA(Val) + AMP + diphosphate. Functionally, catalyzes the attachment of valine to tRNA(Val). As ValRS can inadvertently accommodate and process structurally similar amino acids such as threonine, to avoid such errors, it has a 'posttransfer' editing activity that hydrolyzes mischarged Thr-tRNA(Val) in a tRNA-dependent manner. The polypeptide is Valine--tRNA ligase (Vibrio parahaemolyticus serotype O3:K6 (strain RIMD 2210633)).